Here is a 188-residue protein sequence, read N- to C-terminus: Elongation factor P (188 aa).

The protein belongs to the elongation factor P family.

It localises to the cytoplasm. Its pathway is protein biosynthesis; polypeptide chain elongation. Involved in peptide bond synthesis. Stimulates efficient translation and peptide-bond synthesis on native or reconstituted 70S ribosomes in vitro. Probably functions indirectly by altering the affinity of the ribosome for aminoacyl-tRNA, thus increasing their reactivity as acceptors for peptidyl transferase. This is Elongation factor P from Parabacteroides distasonis (strain ATCC 8503 / DSM 20701 / CIP 104284 / JCM 5825 / NCTC 11152).